The chain runs to 341 residues: UDP-3-O-acylglucosamine N-acyltransferase (341 aa).

His241 serves as the catalytic Proton acceptor.

It belongs to the transferase hexapeptide repeat family. LpxD subfamily. Homotrimer.

The enzyme catalyses a UDP-3-O-[(3R)-3-hydroxyacyl]-alpha-D-glucosamine + a (3R)-hydroxyacyl-[ACP] = a UDP-2-N,3-O-bis[(3R)-3-hydroxyacyl]-alpha-D-glucosamine + holo-[ACP] + H(+). It participates in bacterial outer membrane biogenesis; LPS lipid A biosynthesis. Its function is as follows. Catalyzes the N-acylation of UDP-3-O-acylglucosamine using 3-hydroxyacyl-ACP as the acyl donor. Is involved in the biosynthesis of lipid A, a phosphorylated glycolipid that anchors the lipopolysaccharide to the outer membrane of the cell. The sequence is that of UDP-3-O-acylglucosamine N-acyltransferase from Haemophilus ducreyi (strain 35000HP / ATCC 700724).